A 174-amino-acid polypeptide reads, in one-letter code: Regulator of G-protein signaling 8 (174 aa).

The region spanning 46 to 162 (SFDILLSNKY…IRSKIYQDLL (117 aa)) is the RGS domain.

It is found in the cell membrane. Its subcellular location is the membrane. The protein resides in the perikaryon. It localises to the cell projection. The protein localises to the dendrite. It is found in the nucleus. Regulates G protein-coupled receptor signaling cascades, including signaling via muscarinic acetylcholine receptors and dopamine receptors. Inhibits signal transduction by increasing the GTPase activity of G protein alpha subunits, thereby driving them into their inactive GDP-bound form. Modulates the activity of potassium channels that are activated in response to G protein-coupled receptor signaling. The sequence is that of Regulator of G-protein signaling 8 (rgs8) from Danio rerio (Zebrafish).